Reading from the N-terminus, the 532-residue chain is Protein tweety homolog 2 (532 aa).

At 1-44 (MPAARVEYIAPWWVVWLHSVPHLGLRLQRVDSTFSPGDETYQES) the chain is on the extracellular side. Residues 45-65 (LLFLGVLAAIGLGLNLIFLTV) traverse the membrane as a helical segment. Residues 66-87 (YLVCTCCCRRDHTVQTKQQESC) lie on the Cytoplasmic side of the membrane. The helical transmembrane segment at 88–108 (CVTWTAVVAGLLCCAAVGVGF) threads the bilayer. Residues 109–213 (YGNSETNDGM…QTAYVEYYRW (105 aa)) are Extracellular-facing. Ca(2+) is bound by residues glutamate 113 and aspartate 116. N-linked (GlcNAc...) asparagine glycosylation is present at asparagine 129. An RGD motif is present at residues 164-166 (RGD). Threonine 199 is modified (phosphothreonine). The chain crosses the membrane as a helical span at residues 214–234 (LSYLLLFILDLVICLVTCLGL). The Cytoplasmic segment spans residues 235–240 (ARRSKC). A helical membrane pass occupies residues 241–261 (LLASMLCCGILTLILSWASLA). The Extracellular portion of the chain corresponds to 262-385 (ADAAAAVGTS…DALTGICYDG (124 aa)). 2 disulfides stabilise this stretch: cysteine 274/cysteine 382 and cysteine 300/cysteine 367. Residues asparagine 283 and asparagine 352 are each glycosylated (N-linked (GlcNAc...) asparagine). The helical transmembrane segment at 386-406 (IEGLLFLGLFSLLAALAFSTL) threads the bilayer. Residues 407–532 (TCAGPRAWKY…EHLRHYEFPS (126 aa)) lie on the Cytoplasmic side of the membrane. The residue at position 504 (serine 504) is a Phosphoserine. A PY-motif; mediates interaction with NEDD4L motif is present at residues 506-509 (PPTY).

This sequence belongs to the tweety family. As to quaternary structure, forms cis-homodimers in the presence of Ca(+2) and forms monomers and trans-dimers in the absence of Ca(2+). Interacts with NEDD4L. Ubiquitinated by NEDD4L, leading to its proteasomal degradation.

The protein localises to the cell membrane. It carries out the reaction chloride(in) = chloride(out). It catalyses the reaction L-glutamate(out) = L-glutamate(in). With respect to regulation, inhibited by (4-[(2-butyl-6,7-dichloro-2- cyclopentyl-2,3-dihydro-1-oxo-1H-inden-5-yl)oxy]butanoic acid). Functionally, calcium-independent, swelling-dependent volume-regulated anion channel (VRAC-swell) which plays a pivotal role in the process of regulatory volume decrease (RVD) in the brain through the efflux of anions like chloride and organic osmolytes like glutamate. Probable large-conductance Ca(2+)-activated chloride channel. This Mus musculus (Mouse) protein is Protein tweety homolog 2 (Ttyh2).